A 160-amino-acid polypeptide reads, in one-letter code: uncharacterized protein (160 aa).

Residues 1-33 (MPLRPCRHHQGFLPKKQWRAKFPQLIVLMGRVA) lie on the Extracellular side of the membrane. Residues 34–54 (AEELLPAVAVAAVVVAVVVAV) form a helical membrane-spanning segment. Topologically, residues 55–68 (ERVVPLLFVHRPDS) are cytoplasmic. Residues 69–89 (FFLIFFFQSCFVCCCCCCSCS) form a helical membrane-spanning segment. Over 90–119 (TSLKAYSSEKEKQKYGKRGNGNTPLVQRLV) the chain is Extracellular. Residues 120 to 140 (TLSYLALLILVLSIELLTWFV) traverse the membrane as a helical segment. The Cytoplasmic segment spans residues 141 to 160 (KKQRTGNKKQKDKEKNALLL).

The protein resides in the membrane. This is an uncharacterized protein from Saccharomyces cerevisiae (strain ATCC 204508 / S288c) (Baker's yeast).